A 303-amino-acid chain; its full sequence is Sulfate adenylyltransferase subunit 2 (303 aa).

Belongs to the PAPS reductase family. CysD subfamily. As to quaternary structure, heterodimer composed of CysD, the smaller subunit, and CysN.

The enzyme catalyses sulfate + ATP + H(+) = adenosine 5'-phosphosulfate + diphosphate. The protein operates within sulfur metabolism; hydrogen sulfide biosynthesis; sulfite from sulfate: step 1/3. In terms of biological role, with CysN forms the ATP sulfurylase (ATPS) that catalyzes the adenylation of sulfate producing adenosine 5'-phosphosulfate (APS) and diphosphate, the first enzymatic step in sulfur assimilation pathway. APS synthesis involves the formation of a high-energy phosphoric-sulfuric acid anhydride bond driven by GTP hydrolysis by CysN coupled to ATP hydrolysis by CysD. In Sulfurimonas denitrificans (strain ATCC 33889 / DSM 1251) (Thiomicrospira denitrificans (strain ATCC 33889 / DSM 1251)), this protein is Sulfate adenylyltransferase subunit 2.